Here is a 915-residue protein sequence, read N- to C-terminus: p53-induced death domain-containing protein 1 (915 aa).

At Ala-2 the chain carries N-acetylalanine. LRR repeat units lie at residues 131 to 152 (CLAH…VPEL), 154 to 176 (GLDA…GALP), 177 to 199 (ALTF…GSLS), 200 to 221 (TLQR…IGNL), 223 to 245 (SLSE…AGLR), 246 to 268 (SLRL…VHLP), and 269 to 290 (LITR…LLDA). The residue at position 304 (Ser-304) is a Phosphoserine. 2 ZU5 domains span residues 327-459 (DLDS…VLRP) and 460-601 (VSNT…WYTT). 2 peptidase S68 regions span residues 428 to 457 (DLET…LVVL) and 571 to 599 (DITT…WLWY). Active-site residues include His-449, Ser-451, His-591, and Ser-593. The UPA domain stretch occupies residues 585–721 (ARFQVTHFSW…TTALDREAQD (137 aa)). In terms of domain architecture, Death spans 793-878 (TQSNLLSVAS…DVAEEVRAIL (86 aa)). Positions 888–915 (SIRRTGLAPEDSTLPGTSASQTPESAQA) are disordered. Residues 901-915 (LPGTSASQTPESAQA) show a composition bias toward polar residues.

As to quaternary structure, forms a complex named the PIDDosome with CASP2 and CRADD. Forms a complex with IKBKG and RIPK1. Interacts with FADD and MADD. Post-translationally, undergoes autoproteolytic processing whose extent either directs cells towards survival or apoptotic pathways. Autoproteolytically cleaved into two main fragments PIDD-N and PIDD-C. PIDD-C can be further processed into PIDD-CC, a processing which is enhanced by DNA damage. The cleavage producing PIDD-C is required for translocation of PIDD1 to the nucleus upon DNA damage and activation of NF-kappa-B. PIDD-CC mediates the interaction with CRADD and the cleavage producing PIDD-CC is required for the activation of CASP2. PIDD-N remains associated with PIDD-C and PIDD-CC after cleavage. As to expression, ubiquitous.

The protein resides in the cytoplasm. Its subcellular location is the nucleus. Component of the DNA damage/stress response pathway that functions downstream of p53/TP53 and can either promote cell survival or apoptosis. Associated with CRADD and the CASP2 caspase, it forms the PIDDosome a complex that activates CASP2 and triggers apoptosis. Associated with IKBKG and RIPK1, it enhances sumoylation and ubiquitination of IKBKG which is important for activation of the transcription factor NF-kappa-B. The sequence is that of p53-induced death domain-containing protein 1 from Mus musculus (Mouse).